Reading from the N-terminus, the 148-residue chain is Deoxyuridine 5'-triphosphate nucleotidohydrolase (148 aa).

Substrate-binding positions include Arg-65–Gly-67, Asn-78, Thr-82–Asp-84, and Lys-92.

Belongs to the dUTPase family. Mg(2+) is required as a cofactor.

The enzyme catalyses dUTP + H2O = dUMP + diphosphate + H(+). Its pathway is pyrimidine metabolism; dUMP biosynthesis; dUMP from dCTP (dUTP route): step 2/2. In terms of biological role, this enzyme is involved in nucleotide metabolism: it produces dUMP, the immediate precursor of thymidine nucleotides and it decreases the intracellular concentration of dUTP so that uracil cannot be incorporated into DNA. The polypeptide is Deoxyuridine 5'-triphosphate nucleotidohydrolase (Chlorobium luteolum (strain DSM 273 / BCRC 81028 / 2530) (Pelodictyon luteolum)).